A 233-amino-acid polypeptide reads, in one-letter code: Aspartate/glutamate leucyltransferase (233 aa).

The protein belongs to the R-transferase family. Bpt subfamily.

It localises to the cytoplasm. It carries out the reaction N-terminal L-glutamyl-[protein] + L-leucyl-tRNA(Leu) = N-terminal L-leucyl-L-glutamyl-[protein] + tRNA(Leu) + H(+). The enzyme catalyses N-terminal L-aspartyl-[protein] + L-leucyl-tRNA(Leu) = N-terminal L-leucyl-L-aspartyl-[protein] + tRNA(Leu) + H(+). Functionally, functions in the N-end rule pathway of protein degradation where it conjugates Leu from its aminoacyl-tRNA to the N-termini of proteins containing an N-terminal aspartate or glutamate. This Vibrio parahaemolyticus serotype O3:K6 (strain RIMD 2210633) protein is Aspartate/glutamate leucyltransferase.